The chain runs to 1008 residues: RNA cytidine acetyltransferase (1008 aa).

ATP contacts are provided by residues 282 to 291 (GRGKSAALGL) and Arg443. An N-acetyltransferase domain is found at 531 to 713 (CLLGPVQRMD…VPVYLSQKSN (183 aa)). Residues 601 to 603 (VAT), 608 to 614 (QRMGYGK), and Asn700 contribute to the acetyl-CoA site. At Ser907 the chain carries Phosphoserine. The segment at 950-1008 (ALETNGTGGGSGLLSVKSGVKRLDGPIETREDGDLAAPLSKKKKKNNPKQRRSQGKSLI) is disordered. Positions 970–982 (KRLDGPIETREDG) are enriched in basic and acidic residues. Basic residues predominate over residues 989–1008 (SKKKKKNNPKQRRSQGKSLI).

Belongs to the RNA cytidine acetyltransferase family. NAT10 subfamily. Component of the PRC1 complex (PSC, PC, PH and dRING1) in 0-12 hours Drosophila embryos. This complex is distinct from the Esc/E(z) complex, which contains many other PcG proteins like Esc, E(z), Su(z)12, HDAC1/Rpd3, Caf1-55 and probably Pho. The two complexes however cooperate and interact together during the first 3 hours of development to establish PcG silencing. Part of the small subunit (SSU) processome, composed of more than 70 proteins and the RNA chaperone small nucleolar RNA (snoRNA) U3.

The protein resides in the nucleus. It localises to the nucleolus. It catalyses the reaction a cytidine in 18S rRNA + acetyl-CoA + ATP + H2O = an N(4)-acetylcytidine in 18S rRNA + ADP + phosphate + CoA + H(+). It carries out the reaction a cytidine in tRNA + acetyl-CoA + ATP + H2O = an N(4)-acetylcytidine in tRNA + ADP + phosphate + CoA + H(+). In terms of biological role, RNA cytidine acetyltransferase with specificity toward both 18S rRNA and tRNAs. Catalyzes the formation of N(4)-acetylcytidine (ac4C) in 18S rRNA. Required for early nucleolar cleavages of precursor rRNA at sites A0, A1 and A2 during 18S rRNA synthesis. Catalyzes the formation of ac4C in serine and leucine tRNAs. Requires a tRNA-binding adapter protein for full tRNA acetyltransferase activity but not for 18S rRNA acetylation. Polycomb group (PcG) protein. PcG proteins act by forming multiprotein complexes, which are required to maintain the transcriptionally repressive state of homeotic genes throughout development. PcG proteins are not required to initiate repression, but to maintain it during later stages of development. They probably act via the methylation of histones, rendering chromatin heritably changed in its expressibility. Part of the small subunit (SSU) processome, first precursor of the small eukaryotic ribosomal subunit. During the assembly of the SSU processome in the nucleolus, many ribosome biogenesis factors, an RNA chaperone and ribosomal proteins associate with the nascent pre-rRNA and work in concert to generate RNA folding, modifications, rearrangements and cleavage as well as targeted degradation of pre-ribosomal RNA by the RNA exosome. The sequence is that of RNA cytidine acetyltransferase (l(1)G0020) from Drosophila melanogaster (Fruit fly).